A 255-amino-acid chain; its full sequence is Ribonuclease PH (255 aa).

Phosphate contacts are provided by residues R86 and 124–126 (GTR).

This sequence belongs to the RNase PH family. As to quaternary structure, homohexameric ring arranged as a trimer of dimers.

The catalysed reaction is tRNA(n+1) + phosphate = tRNA(n) + a ribonucleoside 5'-diphosphate. Its function is as follows. Phosphorolytic 3'-5' exoribonuclease that plays an important role in tRNA 3'-end maturation. Removes nucleotide residues following the 3'-CCA terminus of tRNAs; can also add nucleotides to the ends of RNA molecules by using nucleoside diphosphates as substrates, but this may not be physiologically important. Probably plays a role in initiation of 16S rRNA degradation (leading to ribosome degradation) during starvation. The chain is Ribonuclease PH from Aquifex aeolicus (strain VF5).